We begin with the raw amino-acid sequence, 302 residues long: Sulfate adenylyltransferase subunit 2 (302 aa).

The protein belongs to the PAPS reductase family. CysD subfamily. Heterodimer composed of CysD, the smaller subunit, and CysN.

The catalysed reaction is sulfate + ATP + H(+) = adenosine 5'-phosphosulfate + diphosphate. Its pathway is sulfur metabolism; hydrogen sulfide biosynthesis; sulfite from sulfate: step 1/3. Functionally, with CysN forms the ATP sulfurylase (ATPS) that catalyzes the adenylation of sulfate producing adenosine 5'-phosphosulfate (APS) and diphosphate, the first enzymatic step in sulfur assimilation pathway. APS synthesis involves the formation of a high-energy phosphoric-sulfuric acid anhydride bond driven by GTP hydrolysis by CysN coupled to ATP hydrolysis by CysD. The protein is Sulfate adenylyltransferase subunit 2 of Klebsiella pneumoniae (strain 342).